We begin with the raw amino-acid sequence, 48 residues long: Delta-stichotoxin-Hcr1b (48 aa).

Disulfide bonds link cysteine 3/cysteine 43, cysteine 5/cysteine 33, and cysteine 26/cysteine 44.

The protein belongs to the sea anemone sodium channel inhibitory toxin family. Type II subfamily.

It is found in the secreted. It localises to the nematocyst. Binds to site 3 of voltage-gated sodium channels and inhibits the inactivation process. In Radianthus crispa (Leathery sea anemone), this protein is Delta-stichotoxin-Hcr1b.